Reading from the N-terminus, the 64-residue chain is Large ribosomal subunit protein bL35 (64 aa).

Basic residues predominate over residues 1–22 (MPKMKSHTGMGKRVRVTGKGKI). Residues 1-39 (MPKMKSHTGMGKRVRVTGKGKIVKQQAGLRHNLEKKPST) are disordered.

Belongs to the bacterial ribosomal protein bL35 family.

The chain is Large ribosomal subunit protein bL35 from Salinispora arenicola (strain CNS-205).